Consider the following 449-residue polypeptide: Phosphoglucosamine mutase (449 aa).

Ser101 (phosphoserine intermediate) is an active-site residue. Ser101, Asp242, Asp244, and Asp246 together coordinate Mg(2+). The residue at position 101 (Ser101) is a Phosphoserine.

Belongs to the phosphohexose mutase family. The cofactor is Mg(2+). Activated by phosphorylation.

It catalyses the reaction alpha-D-glucosamine 1-phosphate = D-glucosamine 6-phosphate. In terms of biological role, catalyzes the conversion of glucosamine-6-phosphate to glucosamine-1-phosphate. This Bradyrhizobium sp. (strain ORS 278) protein is Phosphoglucosamine mutase.